The chain runs to 1391 residues: ESX-5 secretion system protein EccC5 (1391 aa).

The next 2 membrane-spanning stretches (helical) occupy residues 38–58 and 65–85; these read WLIV…AMVF and FGGI…MMMF. 3 consecutive FtsK domains span residues 476–678, 858–1052, and 1161–1354; these read GELL…GAAQ, QPPW…EDAK, and LAPV…DPDE. Residues 499 to 506, 876 to 883, and 1178 to 1185 each bind ATP; these read GTTGSGKS, GAGGSGKT, and GRRECGRT.

As to quaternary structure, part of the ESX-5 / type VII secretion system (T7SS), which is composed of cytosolic and membrane components. The ESX-5 membrane complex is composed of EccB5, EccC5, EccD5 and EccE5.

It localises to the cell inner membrane. In terms of biological role, part of the ESX-5 specialized secretion system, which is responsible for the secretion of EsxN and a number of PE_PGRS and PPE proteins, including PPE41. This is ESX-5 secretion system protein EccC5 from Mycobacterium tuberculosis (strain CDC 1551 / Oshkosh).